The following is a 375-amino-acid chain: Ribonuclease D (375 aa).

Residues 3–169 enclose the 3'-5' exonuclease domain; sequence YQMITTDDAL…LPITAKLMVE (167 aa). The region spanning 210–289 is the HRDC domain; sequence RTRQLACLQL…EKAQTLPEDA (80 aa).

It belongs to the RNase D family. It depends on a divalent metal cation as a cofactor.

The protein resides in the cytoplasm. It catalyses the reaction Exonucleolytic cleavage that removes extra residues from the 3'-terminus of tRNA to produce 5'-mononucleotides.. In terms of biological role, exonuclease involved in the 3' processing of various precursor tRNAs. Initiates hydrolysis at the 3'-terminus of an RNA molecule and releases 5'-mononucleotides. The protein is Ribonuclease D of Escherichia coli (strain K12).